Reading from the N-terminus, the 288-residue chain is Phosphatidylserine decarboxylase proenzyme (288 aa).

Active-site charge relay system; for autoendoproteolytic cleavage activity residues include Asp90, His147, and Ser254. Ser254 functions as the Schiff-base intermediate with substrate; via pyruvic acid; for decarboxylase activity in the catalytic mechanism. A Pyruvic acid (Ser); by autocatalysis modification is found at Ser254.

Belongs to the phosphatidylserine decarboxylase family. PSD-B subfamily. Prokaryotic type I sub-subfamily. As to quaternary structure, heterodimer of a large membrane-associated beta subunit and a small pyruvoyl-containing alpha subunit. It depends on pyruvate as a cofactor. In terms of processing, is synthesized initially as an inactive proenzyme. Formation of the active enzyme involves a self-maturation process in which the active site pyruvoyl group is generated from an internal serine residue via an autocatalytic post-translational modification. Two non-identical subunits are generated from the proenzyme in this reaction, and the pyruvate is formed at the N-terminus of the alpha chain, which is derived from the carboxyl end of the proenzyme. The autoendoproteolytic cleavage occurs by a canonical serine protease mechanism, in which the side chain hydroxyl group of the serine supplies its oxygen atom to form the C-terminus of the beta chain, while the remainder of the serine residue undergoes an oxidative deamination to produce ammonia and the pyruvoyl prosthetic group on the alpha chain. During this reaction, the Ser that is part of the protease active site of the proenzyme becomes the pyruvoyl prosthetic group, which constitutes an essential element of the active site of the mature decarboxylase.

Its subcellular location is the cell membrane. The catalysed reaction is a 1,2-diacyl-sn-glycero-3-phospho-L-serine + H(+) = a 1,2-diacyl-sn-glycero-3-phosphoethanolamine + CO2. It functions in the pathway phospholipid metabolism; phosphatidylethanolamine biosynthesis; phosphatidylethanolamine from CDP-diacylglycerol: step 2/2. In terms of biological role, catalyzes the formation of phosphatidylethanolamine (PtdEtn) from phosphatidylserine (PtdSer). This is Phosphatidylserine decarboxylase proenzyme from Hamiltonella defensa subsp. Acyrthosiphon pisum (strain 5AT).